The primary structure comprises 249 residues: Ribonuclease 3 (249 aa).

The 130-residue stretch at 20-149 folds into the RNase III domain; that stretch reads FKEFQERISV…FIGALYLDQG (130 aa). Glu-62 serves as a coordination point for Mg(2+). Residue Asp-66 is part of the active site. Mg(2+) is bound by residues Asp-135 and Glu-138. The active site involves Glu-138. Residues 175–244 form the DRBM domain; the sequence is DFKSQLQEFV…AQEALAKMQK (70 aa). A disordered region spans residues 223-249; that stretch reads NGRSKKEAEQHAAQEALAKMQKHHTKQ.

It belongs to the ribonuclease III family. Homodimer. Mg(2+) is required as a cofactor.

Its subcellular location is the cytoplasm. It carries out the reaction Endonucleolytic cleavage to 5'-phosphomonoester.. In terms of biological role, digests double-stranded RNA. Involved in the processing of primary rRNA transcript to yield the immediate precursors to the large and small rRNAs (23S and 16S). Processes some mRNAs, and tRNAs when they are encoded in the rRNA operon. Processes pre-crRNA and tracrRNA of type II CRISPR loci if present in the organism. The protein is Ribonuclease 3 of Bacillus velezensis (strain DSM 23117 / BGSC 10A6 / LMG 26770 / FZB42) (Bacillus amyloliquefaciens subsp. plantarum).